Reading from the N-terminus, the 380-residue chain is MSNTVGQIIKCRAAVAWEAGKPLVIEEVEVAPPQAGEVRLKILFTSLCHTDVYFWEAKGQTPLFPRIFGHEAGGIVESVGEGVTHLKPGDHALPVFTGECGECPHCKSEESNMCDLLRINTDRGVMLNDNKSRFSIKGQPVHHFVGTSTFSEYTVVHAGCVAKINPDAPLDKVCILSCGICTGLGATINVAKPKPGSSVAIFGLGAVGLAAAEGARISGASRIIGVDLVSSRFELAKKFGVNEFVNPKEHDKPVQQVIAEMTNGGVDRAVECTGSIQAMISAFECVHDGWGVAVLVGVPSKDDAFKTHPMNFLNERTLKGTFYGNYKPRTDLPNVVEKYMKGELELEKFITHTVPFSEINKAFDYMLKGESIRCIIKMEE.

The Zn(2+) site is built by Cys-48, Thr-50, His-70, Cys-100, Cys-103, Cys-106, Cys-114, and Cys-178. Residues Thr-50 and His-70 each contribute to the an alcohol site. An NAD(+)-binding site is contributed by Thr-50. NAD(+) is bound by residues 203 to 208 (GLGAVG), Asp-227, Arg-232, Thr-273, Val-296, 296 to 298 (VGV), and Arg-373.

Belongs to the zinc-containing alcohol dehydrogenase family. Homodimer. Zn(2+) is required as a cofactor.

It is found in the cytoplasm. It carries out the reaction a primary alcohol + NAD(+) = an aldehyde + NADH + H(+). The catalysed reaction is a secondary alcohol + NAD(+) = a ketone + NADH + H(+). In Pisum sativum (Garden pea), this protein is Alcohol dehydrogenase 1.